A 132-amino-acid polypeptide reads, in one-letter code: UPF0329 protein ECU07_0050/ECU09_2020 (132 aa).

This sequence belongs to the UPF0329 family.

The sequence is that of UPF0329 protein ECU07_0050/ECU09_2020 from Encephalitozoon cuniculi (strain GB-M1) (Microsporidian parasite).